A 170-amino-acid chain; its full sequence is Protein SprT (170 aa).

Residues 22 to 163 enclose the SprT-like domain; sequence LQQANLTLQT…RCRRCGKTLR (142 aa). Histidine 78 provides a ligand contact to Zn(2+). The active site involves glutamate 79. Zn(2+) is bound at residue histidine 82.

The protein belongs to the SprT family. The cofactor is Zn(2+).

It is found in the cytoplasm. The polypeptide is Protein SprT (Pectobacterium carotovorum subsp. carotovorum (strain PC1)).